Here is a 1338-residue protein sequence, read N- to C-terminus: Serine/threonine-protein kinase cek1 (1338 aa).

The PAS domain maps to 28 to 98; that stretch reads SKDENLQPSI…RAVNCLLKDD (71 aa). The segment at 484–554 is disordered; it reads PDFAIGSPMS…GRSSLFSRGR (71 aa). Positions 491–501 are enriched in polar residues; sequence PMSQDSSNYSS. A Phosphoserine modification is found at Ser525. A compositionally biased stretch (polar residues) spans 541–550; it reads PASNGRSSLF. The region spanning 589-958 is the Protein kinase domain; that stretch reads YKILKPISKG…VEEIKAHPFF (370 aa). Residues 595–603 and Lys618 contribute to the ATP site; that span reads ISKGAFGSV. The active-site Proton acceptor is Asp713. Residue Ser748 is modified to Phosphoserine. Residues 813-842 show a composition bias toward polar residues; that stretch reads ENSAEDSPTATNTPTSQVDESNIFRSTDSP. Disordered regions lie at residues 813-844, 1010-1035, and 1159-1185; these read ENSAEDSPTATNTPTSQVDESNIFRSTDSPRV, KLEEERPASSIPQHVSGNRKGRLRSN, and SSTMSASQSQSSMHTALPDVTEGTSSD. Residues 959–1057 form the AGC-kinase C-terminal domain; that stretch reads KSVNWDTILE…RNLDFLNKAN (99 aa). Residues 1159–1174 are compositionally biased toward low complexity; that stretch reads SSTMSASQSQSSMHTA. Phosphoserine is present on Ser1211.

It belongs to the protein kinase superfamily. Ser/Thr protein kinase family.

It catalyses the reaction L-seryl-[protein] + ATP = O-phospho-L-seryl-[protein] + ADP + H(+). The enzyme catalyses L-threonyl-[protein] + ATP = O-phospho-L-threonyl-[protein] + ADP + H(+). In terms of biological role, may facilitate the progression of anaphase through direct or indirect interaction with the cut8 protein. The polypeptide is Serine/threonine-protein kinase cek1 (cek1) (Schizosaccharomyces pombe (strain 972 / ATCC 24843) (Fission yeast)).